Here is a 158-residue protein sequence, read N- to C-terminus: 6,7-dimethyl-8-ribityllumazine synthase (158 aa).

5-amino-6-(D-ribitylamino)uracil is bound by residues Phe24, 62-64, and 86-88; these read CFE and AVI. A (2S)-2-hydroxy-3-oxobutyl phosphate-binding site is contributed by 91 to 92; it reads DT. Catalysis depends on His94, which acts as the Proton donor. Position 119 (Phe119) interacts with 5-amino-6-(D-ribitylamino)uracil. A (2S)-2-hydroxy-3-oxobutyl phosphate-binding site is contributed by Arg133.

This sequence belongs to the DMRL synthase family.

The enzyme catalyses (2S)-2-hydroxy-3-oxobutyl phosphate + 5-amino-6-(D-ribitylamino)uracil = 6,7-dimethyl-8-(1-D-ribityl)lumazine + phosphate + 2 H2O + H(+). Its pathway is cofactor biosynthesis; riboflavin biosynthesis; riboflavin from 2-hydroxy-3-oxobutyl phosphate and 5-amino-6-(D-ribitylamino)uracil: step 1/2. In terms of biological role, catalyzes the formation of 6,7-dimethyl-8-ribityllumazine by condensation of 5-amino-6-(D-ribitylamino)uracil with 3,4-dihydroxy-2-butanone 4-phosphate. This is the penultimate step in the biosynthesis of riboflavin. The polypeptide is 6,7-dimethyl-8-ribityllumazine synthase (Picosynechococcus sp. (strain ATCC 27264 / PCC 7002 / PR-6) (Agmenellum quadruplicatum)).